Reading from the N-terminus, the 85-residue chain is Large ribosomal subunit protein bL27 (85 aa).

A disordered region spans residues Met-1 to Val-23.

This sequence belongs to the bacterial ribosomal protein bL27 family.

This Thioalkalivibrio sulfidiphilus (strain HL-EbGR7) protein is Large ribosomal subunit protein bL27.